A 210-amino-acid chain; its full sequence is Thymidylate kinase (210 aa).

10–17 (GLEGAGKT) contacts ATP.

It belongs to the thymidylate kinase family.

The enzyme catalyses dTMP + ATP = dTDP + ADP. Phosphorylation of dTMP to form dTDP in both de novo and salvage pathways of dTTP synthesis. This is Thymidylate kinase from Erwinia tasmaniensis (strain DSM 17950 / CFBP 7177 / CIP 109463 / NCPPB 4357 / Et1/99).